Consider the following 839-residue polypeptide: Autophagy-related protein 9A (839 aa).

Residues 1–20 (MAQFDTEYQRLEASYSDSPP) are disordered. N-acetylalanine is present on Ala2. Residues 2-61 (AQFDTEYQRLEASYSDSPPGEEDLLVHVAEGSKSPWHHIENLDLFFSRVYNLHQKNGFTC) are Cytoplasmic-facing. Positions 8 to 11 (YQRL) match the Tyrosine-based sorting signal motif. Ser14, Ser16, and Ser18 each carry phosphoserine. Residues 62-84 (MLIGEIFELMQFLFVVAFTTFLV) traverse the membrane as a helical segment. At 85 to 128 (SCVDYDILFANKMVNHSLHPTEPVKVTLPDAFLPAQVCSARIQE) the chain is on the lumenal side. Residue Asn99 is glycosylated (N-linked (GlcNAc...) asparagine). A helical transmembrane segment spans residues 129 to 154 (NGSLITILVIAGVFWIHRLIKFIYNI). Residues 155-290 (CCYWEIHSFY…ELAQRLSNRI (136 aa)) lie on the Cytoplasmic side of the membrane. The stretch at 291 to 301 (LWIGIANFLLC) is an intramembrane region. Residues 302–319 (PLILIWQILYAFFSYAEV) are Cytoplasmic-facing. The stretch at 320–328 (LKREPGALG) is an intramembrane region. Residues 329-371 (ARCWSLYGRCYLRHFNELEHELQSRLNRGYKPASKYMNCFLSP) lie on the Cytoplasmic side of the membrane. The chain crosses the membrane as a helical span at residues 372 to 397 (LLTLLAKNGAFFAGSILAVLIALTIY). Residues 398 to 406 (DEDVLAVEH) are Lumenal-facing. A helical transmembrane segment spans residues 407 to 424 (VLTTVTLLGVTVTVCRSF). Residues 425–470 (IPDQHMVFCPEQLLRVILAHIHYMPDHWQGNAHRSQTRDEFAQLFQ) are Cytoplasmic-facing. The stretch at 471-480 (YKAVFILEEL) is an intramembrane region. Residues 481-483 (LSP) are Cytoplasmic-facing. Residues 484–492 (IVTPLILIF) lie within the membrane without spanning it. Residues 493–839 (CLRPRALEII…DELPPQVHKV (347 aa)) lie on the Cytoplasmic side of the membrane. A phosphoserine mark is found at Ser656, Ser735, Ser738, Ser741, and Ser828. Disordered regions lie at residues 656-686 (SPLQPGQAPTGRAHSTMTGSGVDARTASSGS) and 717-839 (HKQQ…VHKV). Positions 724–736 (EPERHVWHRRESD) are enriched in basic and acidic residues. Composition is skewed to acidic residues over residues 737–747 (ESGESAPDEGG) and 823–832 (VPEEGSEDEL).

The protein belongs to the ATG9 family. In terms of assembly, homotrimer; forms a homotrimer with a central pore that forms a path between the two membrane leaflets. Interacts (via cytoplasmic its C-terminus) with ATG2A. Interacts with SUPT20H. Interacts (via the tyrosine-based sorting signal motif) with AP4M1; promoting association with the AP-4 complex. Interacts with ARFIP1 and ARFIP2. Interacts with PI4K2A and PI4KB. Interacts with ATG4A; the interaction is direct and promotes ATG9A trafficking. Ufmylated in a DDRGK1 dependent manner.

Its subcellular location is the preautophagosomal structure membrane. The protein resides in the cytoplasmic vesicle. It localises to the autophagosome membrane. It is found in the golgi apparatus. The protein localises to the trans-Golgi network membrane. Its subcellular location is the late endosome membrane. The protein resides in the recycling endosome membrane. It localises to the endoplasmic reticulum membrane. It is found in the mitochondrion membrane. It catalyses the reaction a 1,2-diacyl-sn-glycero-3-phosphocholine(in) = a 1,2-diacyl-sn-glycero-3-phosphocholine(out). The enzyme catalyses a 1,2-diacyl-sn-glycero-3-phospho-L-serine(in) = a 1,2-diacyl-sn-glycero-3-phospho-L-serine(out). It carries out the reaction a 1,2-diacyl-sn-glycero-3-phosphoethanolamine(in) = a 1,2-diacyl-sn-glycero-3-phosphoethanolamine(out). Phospholipid scramblase involved in autophagy by mediating autophagosomal membrane expansion. Cycles between the preautophagosomal structure/phagophore assembly site (PAS) and the cytoplasmic vesicle pool and supplies membrane for the growing autophagosome. Lipid scramblase activity plays a key role in preautophagosomal structure/phagophore assembly by distributing the phospholipids that arrive through ATG2 (ATG2A or ATG2B) from the cytoplasmic to the luminal leaflet of the bilayer, thereby driving autophagosomal membrane expansion. Also required to supply phosphatidylinositol 4-phosphate to the autophagosome initiation site by recruiting the phosphatidylinositol 4-kinase beta (PI4KB) in a process dependent on ARFIP2, but not ARFIP1. In addition to autophagy, also plays a role in necrotic cell death. This chain is Autophagy-related protein 9A, found in Homo sapiens (Human).